Reading from the N-terminus, the 193-residue chain is Epididymal-specific lipocalin-12 (193 aa).

Positions Met-1–Ser-19 are cleaved as a signal peptide. A disulfide bond links Cys-88 and Cys-193. 2 N-linked (GlcNAc...) asparagine glycosylation sites follow: Asn-143 and Asn-172.

It belongs to the calycin superfamily. Lipocalin family. As to quaternary structure, monomer. As to expression, expressed in epididymis.

It is found in the secreted. In terms of biological role, binds all-trans retinoic acid and may act as a retinoid carrier protein within the epididymis. May play a role in male fertility. In Mus musculus (Mouse), this protein is Epididymal-specific lipocalin-12 (Lcn12).